Here is a 31-residue protein sequence, read N- to C-terminus: Kallikrein-1 (31 aa).

One can recognise a Peptidase S1 domain in the interval 1 to 31 (VIGGQECARDSHPWQAAVYHFSDIECGGVLV).

The protein belongs to the peptidase S1 family. Kallikrein subfamily.

It carries out the reaction Preferential cleavage of Arg-|-Xaa bonds in small molecule substrates. Highly selective action to release kallidin (lysyl-bradykinin) from kininogen involves hydrolysis of Met-|-Xaa or Leu-|-Xaa.. Functionally, glandular kallikreins cleave Met-Lys and Arg-Ser bonds in kininogen to release Lys-bradykinin. In Cavia porcellus (Guinea pig), this protein is Kallikrein-1.